The chain runs to 495 residues: MSCFSSRLGASCGVRAFSCASACGPRPGRCCISAAPYRGISCYRGLSGGFGSRSVCGPFRSGSCGRSFGYRSGGVCGPSPPCITTVSVNESLLTPLNLEIDPNAQCVKHEEKEQIKCLNSKFAAFIDKVRFLEQQNKLLETKWQFYQNRKCCESNMEPLFEGYIEALRREAECVEADSGRLAAELNHVQESMEGYKKRYEEEVALRATSENEFVALKKDVDCAYLRKSDLEANAEALTQETDFLRQLYEEETRLLHSHISDTSVVVKMDNSRDLNMDCVVAEIKAQYDDIASRSRAEAESWYRTKCEEMKATVIRHGETLRRTREEINELNRMIQRLTAEIENAKCQNTKLEAAVTQSEQQGEAALTDARCKLAELEGALQKAKQDMACLLKEYQEVMNSKLGLDVEIITYRRLLEGEEQRLCEGVGSVNVCVSSSRGGVTCGGLTYGTTPGRQIASGPSVTGGSITVMAPDSCSPCQPRASSFTCGSSRSVRFA.

A head region spans residues 1 to 111 (MSCFSSRLGA…PNAQCVKHEE (111 aa)). Residues 111–422 (EKEQIKCLNS…RLLEGEEQRL (312 aa)) enclose the IF rod domain. Residues 112–146 (KEQIKCLNSKFAAFIDKVRFLEQQNKLLETKWQFY) are coil 1A. The linker 1 stretch occupies residues 147-156 (QNRKCCESNM). The tract at residues 157–257 (EPLFEGYIEA…YEEETRLLHS (101 aa)) is coil 1B. Residues 258 to 274 (HISDTSVVVKMDNSRDL) form a linker 12 region. Residues 275–418 (NMDCVVAEIK…ITYRRLLEGE (144 aa)) form a coil 2 region. The tract at residues 419–494 (EQRLCEGVGS…TCGSSRSVRF (76 aa)) is tail.

It belongs to the intermediate filament family. Heterotetramer of two type I and two type II keratins.

The sequence is that of Keratin, type II cuticular 87 from Mus musculus (Mouse).